The sequence spans 365 residues: Zinc finger TRAF-type-containing protein 1-A (365 aa).

Residues 1 to 56 (MSEEREAPGPLASSSAGLGAEVGQEEVPGGAGPARLLLLPSDSDGPPKKRLRSEAE) are disordered. The segment at 72-117 (CTVCLDLPKASVYQCTNGHLMCAGCFIHLLADSRLKEEQATCPNCR) adopts an RING-type; degenerate zinc-finger fold. A TRAF-type zinc finger spans residues 113–186 (CPNCRCEISK…PWEGPYHELT (74 aa)).

It belongs to the ZFTRAF1 family.

It is found in the cytoplasm. The sequence is that of Zinc finger TRAF-type-containing protein 1-A from Xenopus laevis (African clawed frog).